The sequence spans 269 residues: 4-hydroxy-tetrahydrodipicolinate reductase (269 aa).

NAD(+) is bound by residues glycine 8–methionine 13, glutamate 34, glycine 98–threonine 100, and alanine 122–tyrosine 125. The active-site Proton donor/acceptor is the histidine 155. Histidine 156 contacts (S)-2,3,4,5-tetrahydrodipicolinate. Lysine 159 (proton donor) is an active-site residue. Residue glycine 165–threonine 166 participates in (S)-2,3,4,5-tetrahydrodipicolinate binding.

The protein belongs to the DapB family.

The protein localises to the cytoplasm. It catalyses the reaction (S)-2,3,4,5-tetrahydrodipicolinate + NAD(+) + H2O = (2S,4S)-4-hydroxy-2,3,4,5-tetrahydrodipicolinate + NADH + H(+). The enzyme catalyses (S)-2,3,4,5-tetrahydrodipicolinate + NADP(+) + H2O = (2S,4S)-4-hydroxy-2,3,4,5-tetrahydrodipicolinate + NADPH + H(+). It functions in the pathway amino-acid biosynthesis; L-lysine biosynthesis via DAP pathway; (S)-tetrahydrodipicolinate from L-aspartate: step 4/4. In terms of biological role, catalyzes the conversion of 4-hydroxy-tetrahydrodipicolinate (HTPA) to tetrahydrodipicolinate. The protein is 4-hydroxy-tetrahydrodipicolinate reductase of Aliivibrio salmonicida (strain LFI1238) (Vibrio salmonicida (strain LFI1238)).